The following is a 282-amino-acid chain: Pantothenate synthetase (282 aa).

30–37 (MGNLHDGH) provides a ligand contact to ATP. The active-site Proton donor is the H37. Position 61 (Q61) interacts with (R)-pantoate. Position 61 (Q61) interacts with beta-alanine. Position 149-152 (149-152 (GNKD)) interacts with ATP. Q155 is a binding site for (R)-pantoate. Residues A178 and 186 to 189 (MSSR) contribute to the ATP site.

It belongs to the pantothenate synthetase family. As to quaternary structure, homodimer.

Its subcellular location is the cytoplasm. It catalyses the reaction (R)-pantoate + beta-alanine + ATP = (R)-pantothenate + AMP + diphosphate + H(+). It participates in cofactor biosynthesis; (R)-pantothenate biosynthesis; (R)-pantothenate from (R)-pantoate and beta-alanine: step 1/1. Its function is as follows. Catalyzes the condensation of pantoate with beta-alanine in an ATP-dependent reaction via a pantoyl-adenylate intermediate. The sequence is that of Pantothenate synthetase from Marinomonas sp. (strain MWYL1).